The primary structure comprises 660 residues: uncharacterized protein (660 aa).

A disordered region spans residues 220-239 (ADARGQAAAPPQAQAPAPPD). Positions 222–239 (ARGQAAAPPQAQAPAPPD) are enriched in low complexity.

This is an uncharacterized protein from Callospermophilus lateralis (Golden-mantled ground squirrel).